A 102-amino-acid polypeptide reads, in one-letter code: Small ribosomal subunit protein uS10 (102 aa).

Belongs to the universal ribosomal protein uS10 family. Part of the 30S ribosomal subunit.

Involved in the binding of tRNA to the ribosomes. The chain is Small ribosomal subunit protein uS10 from Staphylococcus aureus (strain JH9).